The primary structure comprises 102 residues: Large ribosomal subunit protein uL23 (102 aa).

This sequence belongs to the universal ribosomal protein uL23 family. In terms of assembly, part of the 50S ribosomal subunit. Contacts protein L29, and trigger factor when it is bound to the ribosome.

One of the early assembly proteins it binds 23S rRNA. One of the proteins that surrounds the polypeptide exit tunnel on the outside of the ribosome. Forms the main docking site for trigger factor binding to the ribosome. The polypeptide is Large ribosomal subunit protein uL23 (Chromobacterium violaceum (strain ATCC 12472 / DSM 30191 / JCM 1249 / CCUG 213 / NBRC 12614 / NCIMB 9131 / NCTC 9757 / MK)).